The following is a 249-amino-acid chain: General transcription factor IIF subunit 2 (249 aa).

An N-acetylalanine modification is found at Ala2. N6-acetyllysine is present on residues Lys22, Lys33, and Lys137. The residue at position 142 (Ser142) is a Phosphoserine. Positions 227 and 229 each coordinate DNA. At Ser248 the chain carries Phosphoserine.

The protein belongs to the TFIIF beta subunit family. In terms of assembly, heterodimer of an alpha and a beta subunit. Interacts with HTATSF1 and GPBP1. Interacts with URI1. Interacts with GTF2B (via N-terminus); this interaction is inhibited in presence of GTF2F1. Part of TBP-based Pol II pre-initiation complex (PIC), in which Pol II core assembles with general transcription factors and other specific initiation factors including GTF2E1, GTF2E2, GTF2F1, GTF2F2, TCEA1, ERCC2, ERCC3, GTF2H2, GTF2H3, GTF2H4, GTF2H5, GTF2A1, GTF2A2, GTF2B and TBP; this large multi-subunit PIC complex mediates DNA unwinding and targets Pol II core to the transcription start site where the first phosphodiester bond forms.

It is found in the nucleus. TFIIF is a general transcription initiation factor that binds to RNA polymerase II and helps to recruit it to the initiation complex in collaboration with TFIIB. This Bos taurus (Bovine) protein is General transcription factor IIF subunit 2 (GTF2F2).